Consider the following 757-residue polypeptide: Xaa-Pro dipeptidyl-peptidase (757 aa).

Residues Ser-348, Asp-468, and His-498 each act as charge relay system in the active site.

It belongs to the peptidase S15 family. In terms of assembly, homodimer.

It is found in the cytoplasm. It catalyses the reaction Hydrolyzes Xaa-Pro-|- bonds to release unblocked, N-terminal dipeptides from substrates including Ala-Pro-|-p-nitroanilide and (sequentially) Tyr-Pro-|-Phe-Pro-|-Gly-Pro-|-Ile.. Functionally, removes N-terminal dipeptides sequentially from polypeptides having unsubstituted N-termini provided that the penultimate residue is proline. In Streptococcus pneumoniae (strain ATCC 700669 / Spain 23F-1), this protein is Xaa-Pro dipeptidyl-peptidase.